Reading from the N-terminus, the 353-residue chain is (3aS,4S,5R,7aS)-5-hydroxy-7a-methyl-1-oxo-octahydro-1H-indene-4-carboxyl-CoA dehydrogenase (353 aa).

FMN-binding positions include 22–24 (GMG), 171–173 (AGG), and 194–195 (GT).

This sequence belongs to the nitronate monooxygenase family.

It catalyses the reaction (3aS,4S,5R,7aS)-5-hydroxy-7a-methyl-1-oxo-octahydro-1H-indene-4-carboxyl-CoA + NAD(+) = (5R,7aS)-5-hydroxy-7a-methyl-1-oxo-2,3,5,6,7,7a-hexahydro-1H-indene-carboxyl-CoA + NADH + H(+). Its pathway is steroid metabolism; cholesterol degradation. Its function is as follows. Involved in the final steps of cholesterol and steroid degradation. Probably catalyzes the introduction of a double bound into the C ring of 5OH-HIC-CoA, leading to the formation of (5R,7aS)-5-hydroxy-7a-methyl-1-oxo-3,5,6,7-tetrahydro-2H-indene-4-carboxyl-CoA. This Rhodococcus jostii (strain RHA1) protein is (3aS,4S,5R,7aS)-5-hydroxy-7a-methyl-1-oxo-octahydro-1H-indene-4-carboxyl-CoA dehydrogenase.